A 224-amino-acid chain; its full sequence is ATP-dependent dethiobiotin synthetase BioD (224 aa).

Residue 12 to 17 coordinates ATP; the sequence is EVGKTV. Mg(2+) is bound at residue Thr-16. Residue Lys-34 is part of the active site. Thr-38 contacts substrate. ATP contacts are provided by residues Asp-47, 106 to 109, 166 to 167, and 196 to 198; these read EGAG, GS, and PEG. Positions 47 and 106 each coordinate Mg(2+).

The protein belongs to the dethiobiotin synthetase family. In terms of assembly, homodimer. Requires Mg(2+) as cofactor.

Its subcellular location is the cytoplasm. The catalysed reaction is (7R,8S)-7,8-diammoniononanoate + CO2 + ATP = (4R,5S)-dethiobiotin + ADP + phosphate + 3 H(+). Its pathway is cofactor biosynthesis; biotin biosynthesis; biotin from 7,8-diaminononanoate: step 1/2. In terms of biological role, catalyzes a mechanistically unusual reaction, the ATP-dependent insertion of CO2 between the N7 and N8 nitrogen atoms of 7,8-diaminopelargonic acid (DAPA, also called 7,8-diammoniononanoate) to form a ureido ring. This is ATP-dependent dethiobiotin synthetase BioD from Saccharopolyspora erythraea (strain ATCC 11635 / DSM 40517 / JCM 4748 / NBRC 13426 / NCIMB 8594 / NRRL 2338).